Reading from the N-terminus, the 206-residue chain is Large ribosomal subunit protein uL4 (206 aa).

The segment at 44–87 (KRQGTQKAKTRSEVRGGGRKPWRQKGTGHARQGSTRSPQWTGGG) is disordered. Residues 60-71 (GGRKPWRQKGTG) show a composition bias toward basic residues.

It belongs to the universal ribosomal protein uL4 family. As to quaternary structure, part of the 50S ribosomal subunit.

In terms of biological role, one of the primary rRNA binding proteins, this protein initially binds near the 5'-end of the 23S rRNA. It is important during the early stages of 50S assembly. It makes multiple contacts with different domains of the 23S rRNA in the assembled 50S subunit and ribosome. Functionally, forms part of the polypeptide exit tunnel. The polypeptide is Large ribosomal subunit protein uL4 (Agathobacter rectalis (strain ATCC 33656 / DSM 3377 / JCM 17463 / KCTC 5835 / VPI 0990) (Eubacterium rectale)).